The following is a 61-amino-acid chain: Large ribosomal subunit protein eL24 (61 aa).

Residues cysteine 7, cysteine 10, cysteine 33, and cysteine 37 each coordinate Zn(2+). The segment at 7–37 adopts a C4-type zinc-finger fold; sequence CSFCGHEIPPGTGLMYVRNDGTMLWFCSSKC.

Belongs to the eukaryotic ribosomal protein eL24 family. As to quaternary structure, part of the 50S ribosomal subunit. Forms a cluster with proteins L3 and L14. Zn(2+) serves as cofactor.

Binds to the 23S rRNA. The chain is Large ribosomal subunit protein eL24 from Saccharolobus islandicus (strain M.16.27) (Sulfolobus islandicus).